Reading from the N-terminus, the 501-residue chain is MTAAFYDLMDFDEVLEKYDPVMGLEVHVELATETKMFSASSAHFGAAPNSNVDPVSLGLPGALPVVNAKGVEWAIKIGLALNCSIAESSRFARKNYFYPDQPKNYQISQYDEPIAYDGYLDVMLEDGTEWRIEIERAHMEEDTGKLTHLGGTSGRIHGATASLVDCNRAGVPLIEIVTKPIEGAGARAPEIAKAYVSALRDLVKALGVSDGRLDQGSMRVDANLSLRPIGQEEFGTRTETKNINSLKSVEQAITFEMQRQAHVLDNGGTIDQETRHYQETDGTTSKGRPKETAEDYRYFNDPDLPPVIAPAEWVEEIRATLPELPWVRRARIQEEWKLSDAEMRDLVNANALDLIIETVEAGTTPDEARAWWVSYLSQKANETGVELEALPVTPAHVARVVALIKEGKLTNKLGRQAIDGVLAGEGDVDAVVASRGLEVVRDDGAIEAAVDEALAANPDIVEKYRAGNTKVTGAIVGAVMKATRGKADPAQVNKLIAEKLA.

The disordered stretch occupies residues 272 to 291 (QETRHYQETDGTTSKGRPKE).

It belongs to the GatB/GatE family. GatB subfamily. Heterotrimer of A, B and C subunits.

The enzyme catalyses L-glutamyl-tRNA(Gln) + L-glutamine + ATP + H2O = L-glutaminyl-tRNA(Gln) + L-glutamate + ADP + phosphate + H(+). The catalysed reaction is L-aspartyl-tRNA(Asn) + L-glutamine + ATP + H2O = L-asparaginyl-tRNA(Asn) + L-glutamate + ADP + phosphate + 2 H(+). Its function is as follows. Allows the formation of correctly charged Asn-tRNA(Asn) or Gln-tRNA(Gln) through the transamidation of misacylated Asp-tRNA(Asn) or Glu-tRNA(Gln) in organisms which lack either or both of asparaginyl-tRNA or glutaminyl-tRNA synthetases. The reaction takes place in the presence of glutamine and ATP through an activated phospho-Asp-tRNA(Asn) or phospho-Glu-tRNA(Gln). This is Aspartyl/glutamyl-tRNA(Asn/Gln) amidotransferase subunit B from Corynebacterium efficiens (strain DSM 44549 / YS-314 / AJ 12310 / JCM 11189 / NBRC 100395).